The primary structure comprises 171 residues: Nucleoside-triphosphatase THEP1 (171 aa).

ATP contacts are provided by residues 8-15 and 95-102; these read GPPGAGKS and VYLIDEIG.

The protein belongs to the THEP1 NTPase family.

It catalyses the reaction a ribonucleoside 5'-triphosphate + H2O = a ribonucleoside 5'-diphosphate + phosphate + H(+). In terms of biological role, has nucleotide phosphatase activity towards ATP, GTP, CTP, TTP and UTP. May hydrolyze nucleoside diphosphates with lower efficiency. This chain is Nucleoside-triphosphatase THEP1, found in Ignicoccus hospitalis (strain KIN4/I / DSM 18386 / JCM 14125).